The following is a 174-amino-acid chain: Large ribosomal subunit protein uL10 (174 aa).

This sequence belongs to the universal ribosomal protein uL10 family. In terms of assembly, part of the ribosomal stalk of the 50S ribosomal subunit. The N-terminus interacts with L11 and the large rRNA to form the base of the stalk. The C-terminus forms an elongated spine to which L12 dimers bind in a sequential fashion forming a multimeric L10(L12)X complex.

In terms of biological role, forms part of the ribosomal stalk, playing a central role in the interaction of the ribosome with GTP-bound translation factors. This Geotalea uraniireducens (strain Rf4) (Geobacter uraniireducens) protein is Large ribosomal subunit protein uL10.